The following is a 365-amino-acid chain: Phosphoserine aminotransferase (365 aa).

R42 serves as a coordination point for L-glutamate. Residues A76–R77, W103, T154, D175, and Q198 contribute to the pyridoxal 5'-phosphate site. The residue at position 199 (K199) is an N6-(pyridoxal phosphate)lysine. N242–T243 contributes to the pyridoxal 5'-phosphate binding site.

This sequence belongs to the class-V pyridoxal-phosphate-dependent aminotransferase family. SerC subfamily. In terms of assembly, homodimer. It depends on pyridoxal 5'-phosphate as a cofactor.

Its subcellular location is the cytoplasm. The enzyme catalyses O-phospho-L-serine + 2-oxoglutarate = 3-phosphooxypyruvate + L-glutamate. It catalyses the reaction 4-(phosphooxy)-L-threonine + 2-oxoglutarate = (R)-3-hydroxy-2-oxo-4-phosphooxybutanoate + L-glutamate. It functions in the pathway amino-acid biosynthesis; L-serine biosynthesis; L-serine from 3-phospho-D-glycerate: step 2/3. The protein operates within cofactor biosynthesis; pyridoxine 5'-phosphate biosynthesis; pyridoxine 5'-phosphate from D-erythrose 4-phosphate: step 3/5. Its function is as follows. Catalyzes the reversible conversion of 3-phosphohydroxypyruvate to phosphoserine and of 3-hydroxy-2-oxo-4-phosphonooxybutanoate to phosphohydroxythreonine. This is Phosphoserine aminotransferase from Blochmanniella floridana.